A 110-amino-acid polypeptide reads, in one-letter code: Small ribosomal subunit protein bS16 (110 aa).

The tract at residues 84–110 (KRAPRNNPEKAVPRKERKAAAEAAAKA) is disordered. Positions 90-103 (NPEKAVPRKERKAA) are enriched in basic and acidic residues.

The protein belongs to the bacterial ribosomal protein bS16 family.

This Afipia carboxidovorans (strain ATCC 49405 / DSM 1227 / KCTC 32145 / OM5) (Oligotropha carboxidovorans) protein is Small ribosomal subunit protein bS16.